A 160-amino-acid chain; its full sequence is MHFSLVLLVFAAIVIPICADTSTTKDYDDKKSLQTSNFGTAAVANMLHVLQSSDNSKRLLRMNDKAVISDHEEERSSLVKNKQKKLSYRIKKGWENVKKPFKKSAKIIEKPLKKGSKIIIEPFKKVSKIIKKFAIKGAKIVKKPFKKSARIIKKSFKNLN.

Positions 1–19 are cleaved as a signal peptide; sequence MHFSLVLLVFAAIVIPICA. Positions 58–75 match the RxLR-dEER motif; it reads RLLRMNDKAVISDHEEER.

This sequence belongs to the RxLR effector family.

It localises to the secreted. Its subcellular location is the host cell membrane. The protein localises to the host nucleus. Its function is as follows. Secreted effector that suppresses pattern-triggered immunity (PTI) in plant host. The sequence is that of Secreted RxLR effector protein RXLR-C11 from Plasmopara halstedii (Downy mildew of sunflower).